We begin with the raw amino-acid sequence, 345 residues long: Beta-2-glycoprotein 1 (345 aa).

The first 19 residues, 1–19 (MPPPALVLLLGFLCHVAIA), serve as a signal peptide directing secretion. Sushi domains are found at residues 21-81 (RTCP…KCMP), 82-139 (RVCP…VCAP), 140-202 (ITCP…ECRE), and 203-262 (VRCP…SCKA). 11 cysteine pairs are disulfide-bonded: Cys23–Cys66, Cys51–Cys79, Cys84–Cys124, Cys110–Cys137, Cys142–Cys188, Cys174–Cys200, Cys205–Cys248, Cys234–Cys260, Cys264–Cys315, Cys300–Cys325, and Cys307–Cys345. Thr33 is a glycosylation site (O-linked (GalNAc...) threonine). N-linked (GlcNAc...) asparagine glycosylation is present at Asn92. N-linked (GlcNAc...) asparagine glycosylation is found at Asn162, Asn183, and Asn193. An N-linked (GlcNAc...) asparagine glycan is attached at Asn253. The sushi-like stretch occupies residues 263–345 (SCKLSIKRAT…KTDASDVKPC (83 aa)).

Expressed by the liver and secreted in plasma.

Its subcellular location is the secreted. Functionally, binds to various kinds of negatively charged substances such as heparin, phospholipids, and dextran sulfate. May prevent activation of the intrinsic blood coagulation cascade by binding to phospholipids on the surface of damaged cells. In Bos taurus (Bovine), this protein is Beta-2-glycoprotein 1 (APOH).